The chain runs to 588 residues: Probable fumarate reductase Ifc3 (588 aa).

The first 22 residues, 1 to 22 (MKLKYLVSAMALVVLSSGTAMA), serve as a signal peptide directing secretion. The heme c site is built by histidine 31, cysteine 37, cysteine 40, histidine 41, cysteine 58, cysteine 61, histidine 62, histidine 78, histidine 81, cysteine 87, cysteine 90, histidine 91, glycine 93, histidine 94, cysteine 101, cysteine 104, and histidine 105. Residues 135 to 588 (AIAAGPSETT…DNAAKHALDK (454 aa)) are flavoprotein-like. Alanine 154, aspartate 173, asparagine 181, serine 182, glycine 187, and glycine 188 together coordinate FAD. Glycine 187 provides a ligand contact to fumarate. Succinate is bound at residue glycine 187. Arginine 218 provides a ligand contact to heme c. Valine 295 and aspartate 361 together coordinate FAD. 3 residues coordinate succinate: histidine 382, serine 394, and glutamate 395. 2 residues coordinate fumarate: serine 394 and glutamate 395. The active-site Proton donor is the arginine 419. Position 521 (histidine 521) interacts with fumarate. Histidine 521 contributes to the succinate binding site. Glutamate 551 contacts FAD. Residues arginine 561 and glycine 564 each contribute to the fumarate site. Succinate is bound by residues arginine 561 and glycine 564. Positions 564, 566, and 567 each coordinate FAD.

As to quaternary structure, homodimer. FAD is required as a cofactor. Requires heme c as cofactor.

The protein localises to the periplasm. Functionally, flavocytochrome that catalyzes the reduction of fumarate to succinate in vitro. Is essentially unidirectional, catalyzing only fumarate reduction. In vitro, can use the artificial electron donor methyl viologen. May be involved in an alternative route for electron transport to Fe(3+). In Shewanella frigidimarina (strain NCIMB 400), this protein is Probable fumarate reductase Ifc3.